Consider the following 588-residue polypeptide: MKSTQTPSGMPIHKYRPFHEQIAVDLPDRTWPARRITEAPRWCAVDLRDGNQALIDPMSPERKRIMFDLLVRMGYKEIEVGFPSASQTDFDFVRSLIEEGAIPDDVTIQVLTQAREHLIARTYESLRGAKQAIVHLYNSTSVLQREVVFRTDKQGIIDIALEGARLCKRYEETIPEVDVYYEYSPESYTGTELEFAAEICNRVVEVLEPTPERKVILNLPATVEMATPNVYADSIEWMCRHLDRRDEVIVSLHPHNDRGTAVAAAELGYLAGADRIEGCLFGNGERTGNVDLVALGINLFTQGIDPQIDFSDLDGIKRTAEHCNQLAVPERSPWAGDLVYTAFSGSHQDAIKKGFEAMAADAAAQGVTVDEIPWAVPYLPVDPQDLGRSYEAVIRVNSQSGKGGVAYLLKADHSLDLPRRLQIEFSGVVQAKTDAEGGEIPSAQIWSIFQDEYLPAPLDRVEEKWGRFELTSTRTSSDMGGSVSLEVELRDGDRVREASASGNGPIAAFLKVLADQGVDVRLLDYVEHALSASGDALAASYVELEVEGVRLWGVGIDEDSSTASLEAIVSGVNRAIRRTVREPELAAV.

A Pyruvate carboxyltransferase domain is found at 40 to 314 (PRWCAVDLRD…DPQIDFSDLD (275 aa)). Mg(2+)-binding residues include D49, H253, H255, and N289. Residues 456–588 (APLDRVEEKW…TVREPELAAV (133 aa)) are regulatory domain.

The protein belongs to the alpha-IPM synthase/homocitrate synthase family. LeuA type 2 subfamily. In terms of assembly, homodimer. It depends on Mg(2+) as a cofactor.

Its subcellular location is the cytoplasm. The enzyme catalyses 3-methyl-2-oxobutanoate + acetyl-CoA + H2O = (2S)-2-isopropylmalate + CoA + H(+). Its pathway is amino-acid biosynthesis; L-leucine biosynthesis; L-leucine from 3-methyl-2-oxobutanoate: step 1/4. Functionally, catalyzes the condensation of the acetyl group of acetyl-CoA with 3-methyl-2-oxobutanoate (2-ketoisovalerate) to form 3-carboxy-3-hydroxy-4-methylpentanoate (2-isopropylmalate). The chain is 2-isopropylmalate synthase from Clavibacter michiganensis subsp. michiganensis (strain NCPPB 382).